Here is an 805-residue protein sequence, read N- to C-terminus: RFX-like transcription factor daf-19 (805 aa).

Positions 1-14 (MTNEEPVPSTSSVL) are enriched in polar residues. The segment at 1–113 (MTNEEPVPST…TPRKKMEPED (113 aa)) is disordered. Residues 19–92 (KNVKIETPSR…DSKSLSKETH (74 aa)) are compositionally biased toward basic and acidic residues. The segment covering 93–104 (NTISTRSSSSGT) has biased composition (polar residues). The segment at residues 260-334 (TVNWLFENYE…YHYYGIRLKD (75 aa)) is a DNA-binding region (RFX-type winged-helix).

It belongs to the RFX family. Ciliated sensory neurons. As to expression, expressed in the male tail HOB and RnB neurons but not in male-specific CEM head neurons or other ciliated neurons.

It localises to the nucleus. Its function is as follows. Probable transcription factor. May regulate some genes of ciliated sensory neurons. May activate the expression of the shared components of sensory cilia, but not the cell-type-specific expression. Together with transcription factor atf-7, involved in regulation of the serotonergic response of ADF neurons to pathogenic food. Involved in male mating behavior; may play a role in functional specialization of PKD ciliated sensory neurons. The chain is RFX-like transcription factor daf-19 from Caenorhabditis elegans.